A 264-amino-acid polypeptide reads, in one-letter code: MVKPLPRLRLQGFNNLTKALSFNIYDVCYARTEEERQRYIEYIDEQYDADRLTQILTDVAEIIGANILNIARQDYDPQGASVTILISEEPVIDKKQAGKELISDAVVAHMDKSHITVHTYPETHPQEGIATFRADIDVATCGVISPLKALNYLIESLESDIVIMDYRVRGFTRDVKGRKHYIDHKINSIQQFLAKNVKSRYEMFDVNVYQENIFHTKMHLKDFDLDQYLFEERAKNLSFKERMKIETLLKREIEELFHGRNLSE.

The active-site Schiff-base intermediate with substrate; via pyruvic acid is the Ser-113. Ser-113 bears the Pyruvic acid (Ser); by autocatalysis mark. His-118 (proton acceptor; for processing activity) is an active-site residue. The active-site Proton donor; for catalytic activity is the Cys-141.

This sequence belongs to the prokaryotic AdoMetDC family. Type 2 subfamily. As to quaternary structure, heterooctamer of four alpha and four beta chains arranged as a tetramer of alpha/beta heterodimers. It depends on pyruvate as a cofactor. In terms of processing, is synthesized initially as an inactive proenzyme. Formation of the active enzyme involves a self-maturation process in which the active site pyruvoyl group is generated from an internal serine residue via an autocatalytic post-translational modification. Two non-identical subunits are generated from the proenzyme in this reaction, and the pyruvate is formed at the N-terminus of the alpha chain, which is derived from the carboxyl end of the proenzyme. The post-translation cleavage follows an unusual pathway, termed non-hydrolytic serinolysis, in which the side chain hydroxyl group of the serine supplies its oxygen atom to form the C-terminus of the beta chain, while the remainder of the serine residue undergoes an oxidative deamination to produce ammonia and the pyruvoyl group blocking the N-terminus of the alpha chain.

The enzyme catalyses S-adenosyl-L-methionine + H(+) = S-adenosyl 3-(methylsulfanyl)propylamine + CO2. It participates in amine and polyamine biosynthesis; S-adenosylmethioninamine biosynthesis; S-adenosylmethioninamine from S-adenosyl-L-methionine: step 1/1. In terms of biological role, catalyzes the decarboxylation of S-adenosylmethionine to S-adenosylmethioninamine (dcAdoMet), the propylamine donor required for the synthesis of the polyamines spermine and spermidine from the diamine putrescine. The protein is S-adenosylmethionine decarboxylase proenzyme of Xanthomonas euvesicatoria pv. vesicatoria (strain 85-10) (Xanthomonas campestris pv. vesicatoria).